The primary structure comprises 652 residues: DNA ligase (652 aa).

NAD(+) contacts are provided by residues 29–33 (DSDYD), 78–79 (SL), and Glu-107. The N6-AMP-lysine intermediate role is filled by Lys-109. Arg-130, Glu-164, Lys-278, and Lys-302 together coordinate NAD(+). Zn(2+) is bound by residues Cys-395, Cys-398, Cys-413, and Cys-418. The BRCT domain occupies 577–652 (NSDAALFGLT…IEDEDWLRKF (76 aa)).

Belongs to the NAD-dependent DNA ligase family. LigA subfamily. Mg(2+) serves as cofactor. Requires Mn(2+) as cofactor.

The enzyme catalyses NAD(+) + (deoxyribonucleotide)n-3'-hydroxyl + 5'-phospho-(deoxyribonucleotide)m = (deoxyribonucleotide)n+m + AMP + beta-nicotinamide D-nucleotide.. DNA ligase that catalyzes the formation of phosphodiester linkages between 5'-phosphoryl and 3'-hydroxyl groups in double-stranded DNA using NAD as a coenzyme and as the energy source for the reaction. It is essential for DNA replication and repair of damaged DNA. This is DNA ligase from Streptococcus pyogenes serotype M6 (strain ATCC BAA-946 / MGAS10394).